The chain runs to 322 residues: tRNA U34 carboxymethyltransferase (322 aa).

Carboxy-S-adenosyl-L-methionine contacts are provided by residues lysine 90, tryptophan 104, lysine 109, glycine 129, 151 to 153, 180 to 181, methionine 196, tyrosine 200, and arginine 315; these read DPS and IE.

This sequence belongs to the class I-like SAM-binding methyltransferase superfamily. CmoB family. As to quaternary structure, homotetramer.

The enzyme catalyses carboxy-S-adenosyl-L-methionine + 5-hydroxyuridine(34) in tRNA = 5-carboxymethoxyuridine(34) in tRNA + S-adenosyl-L-homocysteine + H(+). Catalyzes carboxymethyl transfer from carboxy-S-adenosyl-L-methionine (Cx-SAM) to 5-hydroxyuridine (ho5U) to form 5-carboxymethoxyuridine (cmo5U) at position 34 in tRNAs. The chain is tRNA U34 carboxymethyltransferase from Cellvibrio japonicus (strain Ueda107) (Pseudomonas fluorescens subsp. cellulosa).